A 1479-amino-acid polypeptide reads, in one-letter code: Protein CHROMATIN REMODELING 20 (1479 aa).

A coiled-coil region spans residues 19–49 (EVIVESKEDEMDIIIEENREAEQEVMEVKAR). Residues 40 to 55 (EQEVMEVKARDGRGEQ) are compositionally biased toward basic and acidic residues. The interval 40–109 (EQEVMEVKAR…DELDLEKPLS (70 aa)) is disordered. Low complexity predominate over residues 76 to 86 (DASSRSESSDF). Basic and acidic residues predominate over residues 94–109 (ILSRRDDELDLEKPLS). A coiled-coil region spans residues 109 to 199 (SEEEIDELIS…EQLDGAGIEL (91 aa)). The ADD domain maps to 472-601 (RDDSQNPANN…KKSIELSSDS (130 aa)). The GATA-type; atypical zinc-finger motif lies at 483 to 514 (RCTACNKVAVEVHSHPLLEVIVCMDCKRSIED). The PHD-type; atypical zinc-finger motif lies at 524-577 (ERHCEWCGHIADLIDCRTCEKLFCASCIKRNIGEEYMSEAQSSGWDCCCCSPIP). Residues 578-598 (LQRLTLELEKAMRDKKSIELS) are a coiled coil. Positions 594–615 (SIELSSDSSSDSSSDNNSVDTD) are disordered. Low complexity predominate over residues 598–615 (SSDSSSDSSSDNNSVDTD). Residues 741-924 (VKSGDKGLGC…YCMVDFVREG (184 aa)) enclose the Helicase ATP-binding domain. 754–761 (HTMGLGKT) contributes to the ATP binding site. The DEAH box motif lies at 875–878 (DEAH). The Helicase C-terminal domain occupies 1122 to 1290 (DILSMSADVG…QVHRTISKEE (169 aa)). Positions 1400–1423 (SESPVVPKPSPSTQTEPLPQPKGF) are disordered.

This sequence belongs to the SNF2/RAD54 helicase family.

The protein localises to the nucleus. It localises to the chromosome. It is found in the telomere. In terms of biological role, involved in transcriptional regulation and chromatin remodeling. Facilitates DNA replication in multiple cellular environments and is required for efficient replication of a subset of genomic loci. Binds to DNA tandem repeat sequences in both telomeres and euchromatin and in vitro binds DNA quadruplex structures. May help stabilizing G-rich regions into regular chromatin structures by remodeling G4 DNA and incorporating H3.3-containing nucleosomes. Involved in DNA repair of gamma-irradiation-mediated damages. This is Protein CHROMATIN REMODELING 20 from Arabidopsis thaliana (Mouse-ear cress).